The following is a 212-amino-acid chain: Methylthioribulose-1-phosphate dehydratase (212 aa).

Positions 103 and 105 each coordinate Zn(2+).

Belongs to the aldolase class II family. MtnB subfamily. Zn(2+) is required as a cofactor.

It carries out the reaction 5-(methylsulfanyl)-D-ribulose 1-phosphate = 5-methylsulfanyl-2,3-dioxopentyl phosphate + H2O. The protein operates within amino-acid biosynthesis; L-methionine biosynthesis via salvage pathway; L-methionine from S-methyl-5-thio-alpha-D-ribose 1-phosphate: step 2/6. Functionally, catalyzes the dehydration of methylthioribulose-1-phosphate (MTRu-1-P) into 2,3-diketo-5-methylthiopentyl-1-phosphate (DK-MTP-1-P). This chain is Methylthioribulose-1-phosphate dehydratase, found in Sorangium cellulosum (strain So ce56) (Polyangium cellulosum (strain So ce56)).